Consider the following 2442-residue polypeptide: Piezo-type mechanosensitive ion channel component 1 (2442 aa).

The Extracellular segment spans residues 1-5 (MTVPP). The helical transmembrane segment at 6–26 (LLKSCVVKLLLPAALLAAAII) threads the bilayer. Position 27 (R27) is a topological domain, cytoplasmic. The helical transmembrane segment at 28–48 (PSFLSIGYVLLALVSAVLPPI) threads the bilayer. Over 49 to 56 (RKSLALPK) the chain is Extracellular. Residues 57–77 (LVGTFVIITFLFCLAVALGVG) form a helical membrane-spanning segment. Residues 78–122 (SYQISEQVVHKNDRTYICNRSDTTLFRSIGLVRFHPTGTFESTRA) lie on the Cytoplasmic side of the membrane. A helical transmembrane segment spans residues 123–143 (FLPEIIATSAALLTIIIVMFL). At 144–173 (SHRDEQLDVVGDVVTVRSESGREQRRQRKL) the chain is on the extracellular side. The chain crosses the membrane as a helical span at residues 174 to 196 (AAIMWSAIGNSLRRLTNFVLFLF). Topologically, residues 197-198 (TA) are cytoplasmic. The helical transmembrane segment at 199–219 (YVGIVKPSLSNSIYFLAFLFI) threads the bilayer. The Extracellular portion of the chain corresponds to 220-239 (STWWSTYTPLRHGVYNQIKK). The helical transmembrane segment at 240-260 (FLIFYSALHFLVLYTYQIPIV) threads the bilayer. The Cytoplasmic segment spans residues 261-303 (HHSWLPTGSFLPRLFGLTVLMDSSCPEWWKFPFVAPDFNDDDL). Residues 304-324 (IMKWPLYANPIVVLVFFYLTV) form a helical membrane-spanning segment. Over 325–454 (AQYKFTRNGS…GDKESAASKG (130 aa)) the chain is Extracellular. N-linked (GlcNAc...) asparagine glycans are attached at residues N332, N392, and N440. Residues 389-417 (LLSNASSSANDDEQGRARSRSPLRNGEEQ) are disordered. Residues 455–475 (MIAVMTFVIFHSYSIALTAMM) form a helical membrane-spanning segment. Over 476–478 (TWA) the chain is Cytoplasmic. A helical membrane pass occupies residues 479–499 (LLYHSIFGLILLILTCILWIF). At 500-506 (RDTRKSS) the chain is on the extracellular side. The chain crosses the membrane as a helical span at residues 507 to 527 (FAMAPIILMYIEFLLILQYFL). The Cytoplasmic segment spans residues 528–552 (SMDIHAEIGDPAWMNFVGIEWTTLP). The helical transmembrane segment at 553-573 (VHAVIILCVQTLLTLPVFLLL) threads the bilayer. Topologically, residues 574–633 (RLARREKFYESLSDYERQRRINSYGTFGASKTGAGGVAVAKFQDPKSRKFAAFVEYLSNK) are extracellular. A helical transmembrane segment spans residues 634-654 (VSVYFIFVVSVVLLVVSTCFA). Topologically, residues 655–656 (PN) are cytoplasmic. A helical transmembrane segment spans residues 657-677 (FYNILFFALWALNLIYLKFSF). Residues 678–683 (RLYRGL) are Extracellular-facing. A helical membrane pass occupies residues 684-704 (AYAFWLTLTFYTSIVIIALYI). At 705–739 (YQFPGVSQWIIRNTSLSQEWLNAIGLVDFRAIGES) the chain is on the cytoplasmic side. The helical transmembrane segment at 740–760 (GALFLQLLAPIALFVVTMLQL) threads the bilayer. Residues 761–832 (KFFHGPWSRA…WRFFEVHISK (72 aa)) are Extracellular-facing. Residues 768–798 (SRATSPRRAENDPPTSTTEAAAVASTSGTQG) are disordered. The segment covering 782–794 (TSTTEAAAVASTS) has biased composition (low complexity). N816 carries an N-linked (GlcNAc...) asparagine glycan. Residues 833 to 853 (IVFVIIAIFIANNINALYIPL) traverse the membrane as a helical segment. Over 854–874 (VILLSLAICLPSAADGIFSLF) the chain is Cytoplasmic. Residues 875 to 895 (MCAYLFLVALSKMIYQLDIVP) traverse the membrane as a helical segment. At 896–931 (ELSQIDRGVGADNCSHGNISMPEWFGLKKEVEGTEP) the chain is on the extracellular side. N908 and N913 each carry an N-linked (GlcNAc...) asparagine glycan. Residues 932–952 (IYMLFGVIVSIIALAFQSIVI) traverse the membrane as a helical segment. The Cytoplasmic segment spans residues 953 to 990 (YRQRHYRASLGLPESMRAKVFPDFHHSHFDRSLKNAIQ). A helical transmembrane segment spans residues 991 to 1011 (FLIDYGFYKFGLEITMIAIGI). Residue D1012 is a topological domain, extracellular. The helical transmembrane segment at 1013–1033 (IFNRMDALAAIQCFWLVLFAL) threads the bilayer. The Cytoplasmic segment spans residues 1034 to 1041 (NKRVFVRR). The helical transmembrane segment at 1042–1062 (IWVFYVIYMAILYPLQFFSYV) threads the bilayer. The Extracellular portion of the chain corresponds to 1063-1096 (GLPPDSCIEYPWSYWIPSYSDDARFNLSYLLNLS). N1088 and N1094 each carry an N-linked (GlcNAc...) asparagine glycan. The chain crosses the membrane as a helical span at residues 1097-1117 (IYGVNWPSAYLIGDFFVLLLA). Residues 1118-1160 (SCQLAVFRREGEDNDSIYNDGNFVIKPENPQYDFIDTKKSYVD) are Cytoplasmic-facing. The helical transmembrane segment at 1161–1181 (YFKSFVFHYGHWITLMSTLAA) threads the bilayer. Over 1182–1187 (GIAGTS) the chain is Extracellular. A helical transmembrane segment spans residues 1188-1210 (LFALGYIIFTLTMLWSGNNLYVM). The Cytoplasmic portion of the chain corresponds to 1211–1231 (NSTLRSFEHTLKRWNALLGYT). The helical transmembrane segment at 1232–1252 (LFTITMKVCLQIFGCVFLSWF) threads the bilayer. Topologically, residues 1253–1299 (DQSGGWGKTLCIVRQLFSITCVNNECHVLKELEDFSKACAVETKEGN) are extracellular. A helical membrane pass occupies residues 1300 to 1320 (IGFDVIALSFLVFQIRIFHSW). Topologically, residues 1321-1615 (YFQHCMVEYR…VVNCIGAHTD (295 aa)) are cytoplasmic. Positions 1463-1502 (DTIKDPDSRALIAVSEPEARKPGGTEETDGDEDEDNKDSK) are disordered. Positions 1488–1498 (EETDGDEDEDN) are enriched in acidic residues. Residues 1616-1636 (ILCYFFAIMTQVMTGGLITLP) form a helical membrane-spanning segment. Residues 1637 to 1654 (LPLMSLFWGNLSNPRPSK) lie on the Extracellular side of the membrane. N1646 carries N-linked (GlcNAc...) asparagine glycosylation. A helical transmembrane segment spans residues 1655–1675 (FFWVTMITYTECVIVIKFVCQ). Over 1676–1706 (FAFMPYNSITWRTEHQMDPMSLDKLFGVSQR) the chain is Cytoplasmic. The helical transmembrane segment at 1707–1727 (DSFALWDIVLLFSLFFHRYML) threads the bilayer. Residues 1728-1833 (RKLGLWKDAN…KFRYIRDLYP (106 aa)) are Extracellular-facing. N-linked (GlcNAc...) asparagine glycosylation occurs at N1737. A helical membrane pass occupies residues 1834-1854 (IMFGIDVICFLIMTFGYSAFG). The Cytoplasmic segment spans residues 1855-1866 (EGGSGNVLDDVK). A helical membrane pass occupies residues 1867-1887 (ASRIPVTLVVMLVGMTLAIII). Over 1888-1900 (DRALYLRKSVVGK) the chain is Extracellular. Residues 1901–1921 (LIYQVLMIAFLHIWVFLVLPN) form a helical membrane-spanning segment. The Cytoplasmic portion of the chain corresponds to 1922–1930 (MTRRSAISN). A helical transmembrane segment spans residues 1931–1951 (HVAQALYVIKSCYFLVSAWQI). At 1952–2046 (RNGYPELCIG…KGKLVKYMMG (95 aa)) the chain is on the extracellular side. Residues 2047-2067 (FPIIIGVVIFIFSPLLLWSLL) traverse the membrane as a helical segment. Residues 2068-2346 (NQIGTISMPE…VGFIDRAFPS (279 aa)) are Cytoplasmic-facing. Residues 2347-2367 (FLAKVFKGGVIAVYLSVILVV) traverse the membrane as a helical segment. At 2368–2442 (GRGLVRGIFT…WTRMSKKKQE (75 aa)) the chain is on the extracellular side.

It belongs to the PIEZO (TC 1.A.75) family. In terms of tissue distribution, expressed in the pharyngeal-intestinal and spermathecal-uterine valves and in multiple reproductive tissues including the germline, somatic oviduct, and spermatheca. During reproduction, it is expressed in sheath cells, sperm, both spermathecal valves and the spermathecal bag cells.

It localises to the cell membrane. In terms of biological role, pore-forming subunit of a mechanosensitive non-specific cation channel. Generates currents characterized by a linear current-voltage relationship. Plays a role in reproduction by positively regulating inter-tissue signaling to promote oocyte maturation, ovulation and fertilization, and sperm navigation from and to the spermatheca. May play a role in regulating cytosolic and endoplasmic reticulum calcium ion release. The chain is Piezo-type mechanosensitive ion channel component 1 from Caenorhabditis elegans.